Here is a 490-residue protein sequence, read N- to C-terminus: Cobyric acid synthase (490 aa).

The region spanning 253-440 (KLRVAAPAAP…LHGVFDEPAA (188 aa)) is the GATase cobBQ-type domain. Cysteine 334 (nucleophile) is an active-site residue. The active site involves histidine 432.

This sequence belongs to the CobB/CobQ family. CobQ subfamily.

The protein operates within cofactor biosynthesis; adenosylcobalamin biosynthesis. Functionally, catalyzes amidations at positions B, D, E, and G on adenosylcobyrinic A,C-diamide. NH(2) groups are provided by glutamine, and one molecule of ATP is hydrogenolyzed for each amidation. This Chromobacterium violaceum (strain ATCC 12472 / DSM 30191 / JCM 1249 / CCUG 213 / NBRC 12614 / NCIMB 9131 / NCTC 9757 / MK) protein is Cobyric acid synthase.